The sequence spans 270 residues: Tetraspanin-17 (270 aa).

The Cytoplasmic portion of the chain corresponds to M1–Y19. The chain crosses the membrane as a helical span at residues F20 to L40. Residues W41–P63 lie on the Extracellular side of the membrane. N-linked (GlcNAc...) asparagine glycosylation is present at N51. A helical membrane pass occupies residues V64 to G84. The Cytoplasmic segment spans residues A85 to K94. Residues F95–F115 traverse the membrane as a helical segment. Over V116 to N234 the chain is Extracellular. Disulfide bonds link C155–C223, C156–C188, C172–C182, and C189–C202. N171 carries an N-linked (GlcNAc...) asparagine glycan. The chain crosses the membrane as a helical span at residues L235–L255. Topologically, residues A256–W270 are cytoplasmic.

This sequence belongs to the tetraspanin (TM4SF) family. Interacts with ADAM10; the interaction influences ADAM10 substrate specificity, endocytosis and turnover.

It localises to the cell membrane. In terms of biological role, part of TspanC8 subgroup, composed of 6 members that interact with the transmembrane metalloprotease ADAM10. This interaction is required for ADAM10 exit from the endoplasmic reticulum and for enzymatic maturation and trafficking to the cell surface as well as substrate specificity. Different TspanC8/ADAM10 complexes have distinct substrates. Seems to regulate VE-cadherin expression in endothelial cells probably through interaction with ADAM10, promoting leukocyte transmigration. In Rattus norvegicus (Rat), this protein is Tetraspanin-17 (Tspan17).